The sequence spans 534 residues: NAD(P)H-quinone oxidoreductase subunit 2 (534 aa).

14 consecutive transmembrane segments (helical) span residues 15 to 35 (ILPEGIVILTLLGVLIVDLIL), 42 to 62 (WIGYLAIAGLFTSIVALYFQW), 79 to 99 (LSIVFRGIIALSAAVTILMSI), 109 to 129 (LAEFIAILLSATLGGMFLSGA), 132 to 152 (LVMIFISLETLSISSYLLTGY), 167 to 187 (LLIGASSTAVFLYGVSLLYGL), 210 to 230 (LGLVIALVFAIAGIGFKISAA), 244 to 264 (PTPVIAFLSVGSKAAGFALAI), 280 to 300 (FVFTALAVLSMILGNVVALAQ), 306 to 326 (MLAYSSIAQAGFVMIGLIAGT), 334 to 354 (IFYLLVYLFMNLCGFTCIILF), 378 to 398 (LGLSIALLSLGGIPPLAGFFG), 410 to 432 (GLYWLVLLGLVTTVVSIYYYIRV), and 466 to 486 (VGLVITLIATSLAGILSNPLF).

The protein belongs to the complex I subunit 2 family. As to quaternary structure, NDH-1 can be composed of about 15 different subunits; different subcomplexes with different compositions have been identified which probably have different functions.

It localises to the cellular thylakoid membrane. It catalyses the reaction a plastoquinone + NADH + (n+1) H(+)(in) = a plastoquinol + NAD(+) + n H(+)(out). The enzyme catalyses a plastoquinone + NADPH + (n+1) H(+)(in) = a plastoquinol + NADP(+) + n H(+)(out). Its function is as follows. NDH-1 shuttles electrons from an unknown electron donor, via FMN and iron-sulfur (Fe-S) centers, to quinones in the respiratory and/or the photosynthetic chain. The immediate electron acceptor for the enzyme in this species is believed to be plastoquinone. Couples the redox reaction to proton translocation, and thus conserves the redox energy in a proton gradient. Cyanobacterial NDH-1 also plays a role in inorganic carbon-concentration. The sequence is that of NAD(P)H-quinone oxidoreductase subunit 2 from Nostoc punctiforme (strain ATCC 29133 / PCC 73102).